Reading from the N-terminus, the 180-residue chain is ATP-dependent protease subunit HslV (180 aa).

Threonine 6 is an active-site residue. Alanine 164, cysteine 167, and threonine 170 together coordinate Na(+).

The protein belongs to the peptidase T1B family. HslV subfamily. As to quaternary structure, a double ring-shaped homohexamer of HslV is capped on each side by a ring-shaped HslU homohexamer. The assembly of the HslU/HslV complex is dependent on binding of ATP.

It localises to the cytoplasm. The enzyme catalyses ATP-dependent cleavage of peptide bonds with broad specificity.. Its activity is regulated as follows. Allosterically activated by HslU binding. Protease subunit of a proteasome-like degradation complex believed to be a general protein degrading machinery. The chain is ATP-dependent protease subunit HslV from Borrelia turicatae (strain 91E135).